The sequence spans 397 residues: Glutamate 5-kinase (397 aa).

Residues 1-28 (MVADLTSDISESQEQETETNSANNNGAV) are disordered. Lys-40 provides a ligand contact to ATP. Ser-80, Asp-168, and Asn-180 together coordinate substrate. ATP-binding positions include 200–201 (SD) and 243–249 (SGGMASK). Residues 306–383 (HGQVYIDQGA…QEIADILGYE (78 aa)) form the PUA domain.

Belongs to the glutamate 5-kinase family.

The protein resides in the cytoplasm. It carries out the reaction L-glutamate + ATP = L-glutamyl 5-phosphate + ADP. It participates in amino-acid biosynthesis; L-proline biosynthesis; L-glutamate 5-semialdehyde from L-glutamate: step 1/2. Functionally, catalyzes the transfer of a phosphate group to glutamate to form L-glutamate 5-phosphate. This is Glutamate 5-kinase from Zymomonas mobilis subsp. mobilis (strain ATCC 31821 / ZM4 / CP4).